A 122-amino-acid chain; its full sequence is Large ribosomal subunit protein bL12 (122 aa).

The protein belongs to the bacterial ribosomal protein bL12 family. In terms of assembly, homodimer. Part of the ribosomal stalk of the 50S ribosomal subunit. Forms a multimeric L10(L12)X complex, where L10 forms an elongated spine to which 2 to 4 L12 dimers bind in a sequential fashion. Binds GTP-bound translation factors.

In terms of biological role, forms part of the ribosomal stalk which helps the ribosome interact with GTP-bound translation factors. Is thus essential for accurate translation. The sequence is that of Large ribosomal subunit protein bL12 from Fusobacterium nucleatum subsp. nucleatum (strain ATCC 25586 / DSM 15643 / BCRC 10681 / CIP 101130 / JCM 8532 / KCTC 2640 / LMG 13131 / VPI 4355).